Reading from the N-terminus, the 31-residue chain is Relaxin B chain (31 aa).

Gln1 carries the post-translational modification Pyrrolidone carboxylic acid.

The protein belongs to the insulin family. As to quaternary structure, heterodimer of a B chain and an A chain linked by two disulfide bonds.

The protein localises to the secreted. In terms of biological role, relaxin is an ovarian hormone that acts with estrogen to produce dilatation of the birth canal in many mammals. In Phocoenoides dalli dalli (Dall's porpoise), this protein is Relaxin B chain.